Here is a 263-residue protein sequence, read N- to C-terminus: Endonuclease 8 (263 aa).

Catalysis depends on proline 2, which acts as the Schiff-base intermediate with DNA. The active-site Proton donor is the glutamate 3. The active-site Proton donor; for beta-elimination activity is lysine 53. 3 residues coordinate DNA: glutamine 70, arginine 125, and asparagine 169. The segment at 229-263 adopts an FPG-type zinc-finger fold; it reads KVFHREGESCERCGGTIERTMLSSRPFYWCPHCQS. Arginine 253 acts as the Proton donor; for delta-elimination activity in catalysis.

Belongs to the FPG family. Zn(2+) serves as cofactor.

It catalyses the reaction 2'-deoxyribonucleotide-(2'-deoxyribose 5'-phosphate)-2'-deoxyribonucleotide-DNA = a 3'-end 2'-deoxyribonucleotide-(2,3-dehydro-2,3-deoxyribose 5'-phosphate)-DNA + a 5'-end 5'-phospho-2'-deoxyribonucleoside-DNA + H(+). Involved in base excision repair of DNA damaged by oxidation or by mutagenic agents. Acts as a DNA glycosylase that recognizes and removes damaged bases. Has a preference for oxidized pyrimidines, such as thymine glycol, 5,6-dihydrouracil and 5,6-dihydrothymine. Has AP (apurinic/apyrimidinic) lyase activity and introduces nicks in the DNA strand. Cleaves the DNA backbone by beta-delta elimination to generate a single-strand break at the site of the removed base with both 3'- and 5'-phosphates. This is Endonuclease 8 from Pectobacterium atrosepticum (strain SCRI 1043 / ATCC BAA-672) (Erwinia carotovora subsp. atroseptica).